The primary structure comprises 506 residues: Sucrose transport protein SUT3 (506 aa).

The Cytoplasmic portion of the chain corresponds to 1–20 (MAVDMELDGGGDGKGKAPPQ). Residues 21 to 41 (ISLSGLFLACMVAGGVQYGWA) traverse the membrane as a helical segment. At 42–54 (LQLSLLTPYIQTL) the chain is on the extracellular side. Residues 55 to 75 (GIPHALTSVMWLCGPIAGLIV) traverse the membrane as a helical segment. The Cytoplasmic portion of the chain corresponds to 76–94 (QPCVGLYSDKCTSSLGRRR). A helical transmembrane segment spans residues 95 to 115 (PFILTGCIIICISVIVIGFSS). The Extracellular portion of the chain corresponds to 116-135 (DIGYALGDATEDCKVYRGPR). A helical membrane pass occupies residues 136–156 (YHAAAAFILGFWLLDFSNNTV). The Cytoplasmic segment spans residues 157-171 (QGPARALMADLSGRH). The chain crosses the membrane as a helical span at residues 172–192 (GPSAANAIFCSWMALGNILGY). Topologically, residues 193–220 (SSGSTNDWHKWFPFLMTRACCEACANLK) are extracellular. A helical membrane pass occupies residues 221–241 (AAFLVAVVFLGLSTAVTMVFA). Residues 242-275 (REVALDPVAAAKRNEGEASGPLAVFKGMKNLPVG) lie on the Cytoplasmic side of the membrane. A helical membrane pass occupies residues 276 to 296 (MPSVLIVTGLTWLSWFPFILF). Over 297-327 (DTDWMGREIYHGRPDGSPAEVTAFQEGVRQG) the chain is Extracellular. Residues 328-348 (AFGLLLNSIVLGISSFLIEPM) traverse the membrane as a helical segment. The Cytoplasmic portion of the chain corresponds to 349 to 355 (CRRLGAR). Residues 356-376 (AVWVMSSAVVCVAMAAVSVLS) traverse the membrane as a helical segment. The Extracellular portion of the chain corresponds to 377–404 (AWSLGDFGGSVQDAARAPAEEGGVRASA). Residues 405–425 (LALFVFLGLPFAVLCSVPFAV) traverse the membrane as a helical segment. The Cytoplasmic segment spans residues 426 to 441 (TAQLTASRGGGQGLCT). A helical membrane pass occupies residues 442–462 (GVLNISIVVPQMAIALGAGPW). Residues 463–470 (DELFGEGN) lie on the Extracellular side of the membrane. The chain crosses the membrane as a helical span at residues 471–491 (IPAFAMASVFAAAAAAAGVVL). The Cytoplasmic portion of the chain corresponds to 492 to 506 (LPKVSVRSVSMAGGH).

This sequence belongs to the glycoside-pentoside-hexuronide (GPH) cation symporter transporter (TC 2.A.2.4) family. As to quaternary structure, homodimer.

It is found in the cell membrane. It participates in glycan biosynthesis; sucrose metabolism. Responsible for the transport of sucrose into the cell, with the concomitant uptake of protons (symport system). May also transport other glucosides. The sequence is that of Sucrose transport protein SUT3 (SUT3) from Oryza sativa subsp. indica (Rice).